Reading from the N-terminus, the 483-residue chain is Coagulation factor X isoform 1 (483 aa).

The signal sequence occupies residues 1-20 (MAPQLLLCLILTFLWSLPEA). Positions 21–40 (ESNVFLKSKVANRFLQRTKR) are excised as a propeptide. The Gla domain maps to 41–86 (ANSLFEEFKSGNIERECIEERCSKEEAREAFEDDEKTETFWNVYVD). Residues Glu-46, Glu-47, Glu-54, Glu-56, Glu-59, Glu-60, Glu-65, Glu-66, Glu-69, Glu-72, and Glu-75 each carry the 4-carboxyglutamate modification. Residues Cys-57 and Cys-62 are joined by a disulfide bond. The 37-residue stretch at 86-122 (DGDQCSSNPCHYGGTCKDGIGSYTCTCLSGYEGKNCE) folds into the EGF-like 1; calcium-binding domain. Disulfide bonds link Cys-90–Cys-101, Cys-95–Cys-110, Cys-112–Cys-121, Cys-129–Cys-140, Cys-136–Cys-149, Cys-151–Cys-164, Cys-172–Cys-345, Cys-245–Cys-250, Cys-265–Cys-281, Cys-393–Cys-407, and Cys-418–Cys-446. Residue Ser-92 is glycosylated (O-linked (Hex...) serine). Asp-103 carries the post-translational modification (3R)-3-hydroxyaspartate. One can recognise an EGF-like 2 domain in the interval 125 to 165 (LYKSCRVDNGDCWHFCKPVQNGIQCSCAESYLLGEDGHSCV). Residues 183-238 (EANLPDFQTDFSDDYDEIDENNFVETPTNFSGLVLTVQSQNATLLKKSDNPSPDIR) constitute a propeptide, activation peptide. The region spanning 239–470 (VVNGTDCKLG…FILWIKRIIR (232 aa)) is the Peptidase S1 domain. His-280 functions as the Charge relay system in the catalytic mechanism. Asn-283 carries N-linked (GlcNAc...) asparagine glycosylation. The Charge relay system role is filled by Asp-325. Catalysis depends on Ser-422, which acts as the Charge relay system.

It belongs to the peptidase S1 family. In terms of assembly, heterodimer of a light chain and a heavy chain; disulfide-linked. In terms of processing, gamma-carboxyglutamate residues are formed by vitamin K dependent carboxylation. These residues are essential for the binding of calcium. The activation peptide is cleaved by factor IXa (in the intrinsic pathway), or by factor VIIa (in the extrinsic pathway). Post-translationally, the iron and 2-oxoglutarate dependent 3-hydroxylation of aspartate and asparagine is (R) stereospecific within EGF domains. In terms of tissue distribution, plasma; synthesized in the liver.

Its subcellular location is the secreted. The catalysed reaction is Selective cleavage of Arg-|-Thr and then Arg-|-Ile bonds in prothrombin to form thrombin.. In terms of biological role, factor Xa is a vitamin K-dependent glycoprotein that converts prothrombin to thrombin in the presence of factor Va, calcium and phospholipid during blood clotting. In Pseudonaja textilis (Eastern brown snake), this protein is Coagulation factor X isoform 1 (F10).